The sequence spans 204 residues: UPF0637 protein Lm4b_01081 (204 aa).

The protein belongs to the UPF0637 family.

This is UPF0637 protein Lm4b_01081 from Listeria monocytogenes serotype 4b (strain CLIP80459).